A 501-amino-acid chain; its full sequence is Ribose import ATP-binding protein RbsA (501 aa).

ABC transporter domains follow at residues 5-241 (LQLK…VGRK) and 252-495 (APGE…VGKL). 37 to 44 (GENGAGKS) is an ATP binding site.

Belongs to the ABC transporter superfamily. Ribose importer (TC 3.A.1.2.1) family. In terms of assembly, the complex is composed of an ATP-binding protein (RbsA), two transmembrane proteins (RbsC) and a solute-binding protein (RbsB).

The protein localises to the cell inner membrane. The catalysed reaction is D-ribose(out) + ATP + H2O = D-ribose(in) + ADP + phosphate + H(+). Its function is as follows. Part of the ABC transporter complex RbsABC involved in ribose import. Responsible for energy coupling to the transport system. This chain is Ribose import ATP-binding protein RbsA, found in Salmonella typhimurium (strain LT2 / SGSC1412 / ATCC 700720).